We begin with the raw amino-acid sequence, 977 residues long: Probable RNA-dependent RNA polymerase 5 (977 aa).

The disordered stretch occupies residues 103-122 (EEMSVDSDAPSPKSLKSEDK).

The protein belongs to the RdRP family.

The catalysed reaction is RNA(n) + a ribonucleoside 5'-triphosphate = RNA(n+1) + diphosphate. Functionally, probably involved in the RNA silencing pathway and required for the generation of small interfering RNAs (siRNAs). The sequence is that of Probable RNA-dependent RNA polymerase 5 (RDR5) from Arabidopsis thaliana (Mouse-ear cress).